The following is a 362-amino-acid chain: 3-isopropylmalate dehydrogenase (362 aa).

NAD(+) is bound at residue Gly78–Glu91. Residues Arg98, Arg108, Arg136, and Asp226 each coordinate substrate. Mg(2+) is bound by residues Asp226, Asp250, and Asp254. Position 284 to 296 (Gly284 to Asn296) interacts with NAD(+).

Belongs to the isocitrate and isopropylmalate dehydrogenases family. LeuB type 1 subfamily. As to quaternary structure, homodimer. The cofactor is Mg(2+). It depends on Mn(2+) as a cofactor.

Its subcellular location is the cytoplasm. It catalyses the reaction (2R,3S)-3-isopropylmalate + NAD(+) = 4-methyl-2-oxopentanoate + CO2 + NADH. It functions in the pathway amino-acid biosynthesis; L-leucine biosynthesis; L-leucine from 3-methyl-2-oxobutanoate: step 3/4. Its function is as follows. Catalyzes the oxidation of 3-carboxy-2-hydroxy-4-methylpentanoate (3-isopropylmalate) to 3-carboxy-4-methyl-2-oxopentanoate. The product decarboxylates to 4-methyl-2 oxopentanoate. The protein is 3-isopropylmalate dehydrogenase of Nostoc sp. (strain PCC 7120 / SAG 25.82 / UTEX 2576).